The sequence spans 913 residues: SUN domain-containing protein 1 (913 aa).

The tract at residues 1–139 (MDFSRLHTYT…VLRHPVLDES (139 aa)) is LMNA-binding. Residues 1 to 415 (MDFSRLHTYT…LTRCLRNICK (415 aa)) are Nuclear-facing. 2 positions are modified to phosphoserine: S48 and S66. The span at 69-81 (SQAIDSHISTSRA) shows a compositional bias: polar residues. The interval 69 to 120 (SQAIDSHISTSRATPAKGRETRTVKQRRSASKPAFSINHLSGKGLSSSTSHD) is disordered. A compositionally biased stretch (low complexity) spans 108 to 120 (LSGKGLSSSTSHD). Phosphoserine is present on S139. Residues 209–302 (SRVYSRDRTL…MTAGELSRVD (94 aa)) are SYNE2-binding. Positions 223–302 (VSFYLDRTLW…MTAGELSRVD (80 aa)) are EMD-binding. Residues 416-436 (VFVLLLPLLLLLGAGVSLWGQ) form a helical membrane-spanning segment. The Perinuclear space segment spans residues 437–913 (GNFFSLLPVL…RFRVHGEPIQ (477 aa)). A disordered region spans residues 456–485 (RVDDSKGMHRPGPLPPSPPPKVDHKASQWP). Coiled-coil stretches lie at residues 491–533 (GQKV…EGLS) and 563–638 (HHDH…CEQA). Residues 703–913 (TSEAIVSAVN…RFRVHGEPIQ (211 aa)) form a sufficient for interaction with SYNE1 and SYNE2 region. One can recognise an SUN domain in the interval 751–912 (GGSILSTRCS…YRFRVHGEPI (162 aa)).

In terms of assembly, core component of the LINC complex which is composed of inner nuclear membrane SUN domain-containing proteins coupled to outer nuclear membrane KASH domain-containing nesprins. SUN and KASH domain-containing proteins seem to bind each other promiscuously; however, differentially expression of LINC complex constituents is giving rise to specific assemblies. At least SUN1/2-containing core LINC complexes are proposed to be hexameric composed of three protomers of each KASH and SUN domain-containing protein. Interacts with KASH5 (via the last 22 amino acids); this interaction mediates KASH5 telomere localization by forming a SUN1:KASH5 LINC complex. Isoform 5 is proposed to form a non-nuclear spermatogenesis-specific LINC complex with SYNE3 during sperm head formation. Interacts with SYNE2 and SYNE1; probably forming respective LINC complexes. Interacts with A-type lamin with a strong preference for unprocessed A-type lamin compared with the mature protein. Interaction with lamins B1 and C is hardly detectable. Interacts with NAT10. Interacts with EMD and TSNAX. Associates with the nuclear pore complex (NPC). Interacts with CCDC79/TERB1; promoting the accumulation of the LINC complex complexes at the telomere-nuclear envelope attachment sites. Interacts with IRAG2. Interacts (via KASH domain) with TMEM258. The disulfide bond with KASH domain-containing nesprins is required for stability of the respective LINC complexes under tensile forces. In terms of tissue distribution, widely expressed. Expressed in cochlear outer hair cells (at protein level). Seven isoforms are expressed in testis including testis-specific isoform 5. Isoform 5 is the only isoform expressed at the end of sperm differentiation. Six isoforms are expressed in muscle, heart and brain, four isoforms in kidney and three isoforms in liver.

It localises to the nucleus inner membrane. The protein localises to the cytoplasmic vesicle. The protein resides in the secretory vesicle. It is found in the acrosome outer membrane. Its function is as follows. As a component of the LINC (LInker of Nucleoskeleton and Cytoskeleton) complex involved in the connection between the nuclear lamina and the cytoskeleton. The nucleocytoplasmic interactions established by the LINC complex play an important role in the transmission of mechanical forces across the nuclear envelope and in nuclear movement and positioning. Required for interkinetic nuclear migration (INM) and essential for nucleokinesis and centrosome-nucleus coupling during radial neuronal migration in the cerebral cortex and during glial migration. Involved in telomere attachment to nuclear envelope in the prophase of meiosis implicating a SUN1/2:KASH5 LINC complex in which SUN1 and SUN2 seem to act at least partial redundantly. Required for gametogenesis and involved in selective gene expression of coding and non-coding RNAs needed for gametogenesis. Helps to define the distribution of nuclear pore complexes (NPCs). Required for efficient localization of SYNE4 in the nuclear envelope. May be involved in nuclear remodeling during sperm head formation in spermatogenesis. May play a role in DNA repair by suppressing non-homologous end joining repair to facilitate the repair of DNA cross-links. Isoform 5 may be involved in nuclear remodeling during sperm head formation in spermatogenesis. A probable SUN1 isoform 5:SYNE3 LINC complex may tether spermatid nuclei to anterior cytoskeletal structures such as actin filaments present at membraneous junctions of spermatids and Sertoli cells. This chain is SUN domain-containing protein 1, found in Mus musculus (Mouse).